The sequence spans 554 residues: Phenylalanine--tRNA ligase beta subunit (554 aa).

Positions 276–351 constitute a B5 domain; sequence LSLKSRMISV…INYGYEKFEG (76 aa). Asp-329, Asp-335, Glu-338, and Glu-339 together coordinate Mg(2+).

It belongs to the phenylalanyl-tRNA synthetase beta subunit family. Type 2 subfamily. In terms of assembly, tetramer of two alpha and two beta subunits. Mg(2+) is required as a cofactor.

The protein resides in the cytoplasm. The enzyme catalyses tRNA(Phe) + L-phenylalanine + ATP = L-phenylalanyl-tRNA(Phe) + AMP + diphosphate + H(+). This Methanococcus maripaludis (strain C5 / ATCC BAA-1333) protein is Phenylalanine--tRNA ligase beta subunit.